The following is a 496-amino-acid chain: NADH-quinone oxidoreductase subunit N (496 aa).

Helical transmembrane passes span 8-28 (LLSTEIIMAVLGLGLFAVGLI), 37-57 (MFPLTLFALLGTLAYAVYDFF), 73-93 (QFAGFFKILFLVAALLVVLST), 110-130 (LLLLAALGMMLMAGAGDLLTM), 131-151 (YVGLELMTITFYILVAYHPND), 162-182 (LVLGAASSAVLLYGISLIYGL), 203-223 (TILATVMMLAGFGFKISLVPF), 235-255 (PAPITAFLATASKAAGFAALV), 271-291 (GLILLLVLAAITMIIGNLMAF), 300-320 (MAYSGIAQAGYIIVGVIAVSI), 341-361 (GVLFYLMIYVFANLGAFAVIT), 386-406 (AAVLTLSVLSLAGIPPLAGFV), 421-441 (VWIAVIGFVMSMISVYYYLSI), and 464-484 (FGMIFSMIVTIVLGIYPTPLA).

Belongs to the complex I subunit 2 family. NDH-1 is composed of 14 different subunits. Subunits NuoA, H, J, K, L, M, N constitute the membrane sector of the complex.

The protein resides in the cell membrane. The catalysed reaction is a quinone + NADH + 5 H(+)(in) = a quinol + NAD(+) + 4 H(+)(out). NDH-1 shuttles electrons from NADH, via FMN and iron-sulfur (Fe-S) centers, to quinones in the respiratory chain. The immediate electron acceptor for the enzyme in this species is believed to be a menaquinone. Couples the redox reaction to proton translocation (for every two electrons transferred, four hydrogen ions are translocated across the cytoplasmic membrane), and thus conserves the redox energy in a proton gradient. The polypeptide is NADH-quinone oxidoreductase subunit N (Desulfitobacterium hafniense (strain DSM 10664 / DCB-2)).